Here is a 450-residue protein sequence, read N- to C-terminus: Aspartyl/glutamyl-tRNA(Asn/Gln) amidotransferase subunit B (450 aa).

Belongs to the GatB/GatE family. GatB subfamily. In terms of assembly, heterotrimer of A, B and C subunits.

The catalysed reaction is L-glutamyl-tRNA(Gln) + L-glutamine + ATP + H2O = L-glutaminyl-tRNA(Gln) + L-glutamate + ADP + phosphate + H(+). It catalyses the reaction L-aspartyl-tRNA(Asn) + L-glutamine + ATP + H2O = L-asparaginyl-tRNA(Asn) + L-glutamate + ADP + phosphate + 2 H(+). Its function is as follows. Allows the formation of correctly charged Asn-tRNA(Asn) or Gln-tRNA(Gln) through the transamidation of misacylated Asp-tRNA(Asn) or Glu-tRNA(Gln) in organisms which lack either or both of asparaginyl-tRNA or glutaminyl-tRNA synthetases. The reaction takes place in the presence of glutamine and ATP through an activated phospho-Asp-tRNA(Asn) or phospho-Glu-tRNA(Gln). The protein is Aspartyl/glutamyl-tRNA(Asn/Gln) amidotransferase subunit B of Methanobrevibacter smithii (strain ATCC 35061 / DSM 861 / OCM 144 / PS).